We begin with the raw amino-acid sequence, 837 residues long: Periplasmic nitrate reductase (837 aa).

Residues 1–31 constitute a signal peptide (tat-type signal); that stretch reads MKLNRRDFIKANAAAAAISAAGLSVPGAAVA. Residues 37 to 93 form the 4Fe-4S Mo/W bis-MGD-type domain; sequence IRWDKAACRFCGTGCGVLVGTQDGRVVATQGDPDAPVNRGLNCIKGYFLSKIMYGAD. Residues C44, C47, C51, and C79 each coordinate [4Fe-4S] cluster. Residues K81, Q148, N173, C177, 210–217, 241–245, and 260–262 contribute to the Mo-bis(molybdopterin guanine dinucleotide) site; these read WGSNMAEM, STFEH, and QTD. A disordered region spans residues 308 to 329; sequence EKNATSNGYPDADGKPKGDTGK. Positions 319-329 are enriched in basic and acidic residues; that stretch reads ADGKPKGDTGK. Mo-bis(molybdopterin guanine dinucleotide) is bound by residues M381, Q385, N491, 517–518, K540, D567, and 727–736; these read SD and TGRVLEHWHT. F803 is a binding site for substrate. Mo-bis(molybdopterin guanine dinucleotide) is bound by residues N811 and K828.

This sequence belongs to the prokaryotic molybdopterin-containing oxidoreductase family. NasA/NapA/NarB subfamily. Component of the periplasmic nitrate reductase NapAB complex composed of NapA and NapB. [4Fe-4S] cluster serves as cofactor. The cofactor is Mo-bis(molybdopterin guanine dinucleotide). Post-translationally, predicted to be exported by the Tat system. The position of the signal peptide cleavage has not been experimentally proven.

It localises to the periplasm. It carries out the reaction 2 Fe(II)-[cytochrome] + nitrate + 2 H(+) = 2 Fe(III)-[cytochrome] + nitrite + H2O. Functionally, catalytic subunit of the periplasmic nitrate reductase complex NapAB. Receives electrons from NapB and catalyzes the reduction of nitrate to nitrite. In Dechloromonas aromatica (strain RCB), this protein is Periplasmic nitrate reductase.